The sequence spans 389 residues: Succinate--CoA ligase [ADP-forming] subunit beta (389 aa).

In terms of domain architecture, ATP-grasp spans 9-244 (KQLLAEYGIP…KTQEDPTEVI (236 aa)). ATP-binding positions include Lys-46, 53 to 55 (GRG), Gly-102, and Glu-107. 2 residues coordinate Mg(2+): Asn-199 and Asp-213. Substrate is bound by residues Asn-264 and 321 to 323 (GIV).

This sequence belongs to the succinate/malate CoA ligase beta subunit family. In terms of assembly, heterotetramer of two alpha and two beta subunits. The cofactor is Mg(2+).

The catalysed reaction is succinate + ATP + CoA = succinyl-CoA + ADP + phosphate. It carries out the reaction GTP + succinate + CoA = succinyl-CoA + GDP + phosphate. Its pathway is carbohydrate metabolism; tricarboxylic acid cycle; succinate from succinyl-CoA (ligase route): step 1/1. In terms of biological role, succinyl-CoA synthetase functions in the citric acid cycle (TCA), coupling the hydrolysis of succinyl-CoA to the synthesis of either ATP or GTP and thus represents the only step of substrate-level phosphorylation in the TCA. The beta subunit provides nucleotide specificity of the enzyme and binds the substrate succinate, while the binding sites for coenzyme A and phosphate are found in the alpha subunit. This Stenotrophomonas maltophilia (strain R551-3) protein is Succinate--CoA ligase [ADP-forming] subunit beta.